Here is a 177-residue protein sequence, read N- to C-terminus: ATP synthase subunit delta (177 aa).

This sequence belongs to the ATPase delta chain family. As to quaternary structure, F-type ATPases have 2 components, F(1) - the catalytic core - and F(0) - the membrane proton channel. F(1) has five subunits: alpha(3), beta(3), gamma(1), delta(1), epsilon(1). F(0) has three main subunits: a(1), b(2) and c(10-14). The alpha and beta chains form an alternating ring which encloses part of the gamma chain. F(1) is attached to F(0) by a central stalk formed by the gamma and epsilon chains, while a peripheral stalk is formed by the delta and b chains.

It localises to the cell inner membrane. Its function is as follows. F(1)F(0) ATP synthase produces ATP from ADP in the presence of a proton or sodium gradient. F-type ATPases consist of two structural domains, F(1) containing the extramembraneous catalytic core and F(0) containing the membrane proton channel, linked together by a central stalk and a peripheral stalk. During catalysis, ATP synthesis in the catalytic domain of F(1) is coupled via a rotary mechanism of the central stalk subunits to proton translocation. In terms of biological role, this protein is part of the stalk that links CF(0) to CF(1). It either transmits conformational changes from CF(0) to CF(1) or is implicated in proton conduction. The protein is ATP synthase subunit delta of Pectobacterium atrosepticum (strain SCRI 1043 / ATCC BAA-672) (Erwinia carotovora subsp. atroseptica).